A 529-amino-acid polypeptide reads, in one-letter code: Glycerol kinase 5 (529 aa).

Residues serine 28 and serine 29 each coordinate ATP. Residues arginine 98, aspartate 275, and glutamine 276 each contribute to the glycerol site. Residues threonine 297, glycine 340, and glycine 440 each coordinate ATP.

The protein belongs to the FGGY kinase family.

It is found in the cytoplasm. The enzyme catalyses glycerol + ATP = sn-glycerol 3-phosphate + ADP + H(+). It functions in the pathway polyol metabolism; glycerol degradation via glycerol kinase pathway; sn-glycerol 3-phosphate from glycerol: step 1/1. In terms of biological role, skin-specific kinase that plays a key role in glycerol metabolism, catalyzing its phosphorylation to produce sn-glycerol 3-phosphate. Involved in skin-specific regulation of sterol regulatory element-binding protein (SREBP) processing and lipid biosynthesis. The chain is Glycerol kinase 5 from Homo sapiens (Human).